The following is a 310-amino-acid chain: Syntaxin-81 (310 aa).

Over M1–R289 the chain is Cytoplasmic. Positions R77 to N114 form a coiled coil. Residues T290–S310 form a helical; Anchor for type IV membrane protein membrane-spanning segment.

Belongs to the syntaxin family. As to quaternary structure, part of the t-SNARE complex. Interacts with MAG2.

The protein localises to the membrane. In terms of biological role, vesicle trafficking protein that functions in the secretory pathway. This is Syntaxin-81 (SYP81) from Arabidopsis thaliana (Mouse-ear cress).